A 110-amino-acid polypeptide reads, in one-letter code: Subtilisin inhibitor-like protein 1 (110 aa).

2 disulfide bridges follow: Cys-30/Cys-44 and Cys-68/Cys-98.

The protein belongs to the protease inhibitor I16 (SSI) family. As to quaternary structure, homodimer.

The protein resides in the secreted. Its function is as follows. Strong inhibitor of subtilisin BPN'. The polypeptide is Subtilisin inhibitor-like protein 1 (Streptomyces cacaoi).